A 232-amino-acid chain; its full sequence is Dehydrin DHN3 (232 aa).

A compositionally biased stretch (polar residues) spans 1 to 14 (MSQYQNQYGAQTGM). Disordered stretches follow at residues 1-66 (MSQY…QHRG) and 140-232 (EHHG…CTGH). Residues 49–60 (TTGGATGQGHGH) show a composition bias toward gly residues. Positions 140–157 (EHHGDKKGVMDKIKEKIP) are enriched in basic and acidic residues. Positions 159–168 (TEQSRTNTDG) are enriched in polar residues. The segment covering 198-223 (EQQDVHHGDEQHGEKKGIMEKIKEKL) has biased composition (basic and acidic residues).

The protein belongs to the plant dehydrin family.

This chain is Dehydrin DHN3 (DHN3), found in Pisum sativum (Garden pea).